The sequence spans 267 residues: 4-hydroxy-tetrahydrodipicolinate reductase (267 aa).

Residues 8–13 (GIAGRM), Glu34, 98–100 (GST), and 122–125 (SPNM) contribute to the NAD(+) site. The Proton donor/acceptor role is filled by His155. Residue His156 coordinates (S)-2,3,4,5-tetrahydrodipicolinate. The active-site Proton donor is Lys159. 165–166 (GT) is a binding site for (S)-2,3,4,5-tetrahydrodipicolinate.

It belongs to the DapB family.

It localises to the cytoplasm. The enzyme catalyses (S)-2,3,4,5-tetrahydrodipicolinate + NAD(+) + H2O = (2S,4S)-4-hydroxy-2,3,4,5-tetrahydrodipicolinate + NADH + H(+). The catalysed reaction is (S)-2,3,4,5-tetrahydrodipicolinate + NADP(+) + H2O = (2S,4S)-4-hydroxy-2,3,4,5-tetrahydrodipicolinate + NADPH + H(+). The protein operates within amino-acid biosynthesis; L-lysine biosynthesis via DAP pathway; (S)-tetrahydrodipicolinate from L-aspartate: step 4/4. Its function is as follows. Catalyzes the conversion of 4-hydroxy-tetrahydrodipicolinate (HTPA) to tetrahydrodipicolinate. The chain is 4-hydroxy-tetrahydrodipicolinate reductase from Syntrophobacter fumaroxidans (strain DSM 10017 / MPOB).